The primary structure comprises 132 residues: Riboflavin kinase (132 aa).

10–15 (GLGEGR) contacts CDP. Positions 39 and 41 each coordinate Mg(2+). Positions 95, 96, and 103 each coordinate FMN. 108–111 (MKLR) serves as a coordination point for CDP.

Monomer. The cofactor is Mg(2+).

The catalysed reaction is riboflavin + CTP = CDP + FMN + H(+). It functions in the pathway cofactor biosynthesis; FMN biosynthesis; FMN from riboflavin (CTP route): step 1/1. Catalyzes the CTP-dependent phosphorylation of riboflavin (vitamin B2) to form flavin mononucleotide (FMN). Can also utilize UTP as the phosphate donor, although less efficiently, and it is unclear if ATP and GTP can also serve as substrates or not. This Methanocaldococcus jannaschii (strain ATCC 43067 / DSM 2661 / JAL-1 / JCM 10045 / NBRC 100440) (Methanococcus jannaschii) protein is Riboflavin kinase (ribK).